The following is a 664-amino-acid chain: Protein LYK5 (664 aa).

The signal sequence occupies residues 1 to 26 (MAACTLHALSVTLFLLLFFAVSPAKA). The Extracellular segment spans residues 27 to 277 (QQPYVNNHQL…DPPGSSSSHK (251 aa)). Residues asparagine 45, asparagine 81, asparagine 111, asparagine 125, and asparagine 129 are each glycosylated (N-linked (GlcNAc...) asparagine). Intrachain disulfides connect cysteine 52-cysteine 114, cysteine 58-cysteine 181, and cysteine 112-cysteine 179. 135 to 141 (GDETYFS) contributes to the chitin binding site. N-linked (GlcNAc...) asparagine glycosylation is present at asparagine 144. A chitin-binding site is contributed by 164-170 (ERQLTPG). Residues 195–238 (LTYLVAMGDSISGIAEMFNSTSAAITEGNELTSDNIFFFTPVLV) form the LysM domain. A glycan (N-linked (GlcNAc...) asparagine) is linked at asparagine 213. Over residues 251–269 (PSPPPPPVVATPPQTPVDP) the composition is skewed to pro residues. A disordered region spans residues 251 to 270 (PSPPPPPVVATPPQTPVDPP). The chain crosses the membrane as a helical span at residues 278-298 (WIYIGIGIGAGLLLLLSILAL). The Cytoplasmic portion of the chain corresponds to 299–664 (CFYKRRSKKK…DLLRSGSLGN (366 aa)). One can recognise a Protein kinase domain in the interval 351–643 (KSAIESLTLY…TQVLTTLSMI (293 aa)). ATP-binding positions include 357–365 (LTLYRFNDL) and lysine 395.

It belongs to the protein kinase superfamily. Ser/Thr protein kinase family.

Its subcellular location is the cell membrane. Functionally, may recognize microbe-derived N-acetylglucosamine (NAG)-containing ligands. The chain is Protein LYK5 (LYK5) from Arabidopsis thaliana (Mouse-ear cress).